The chain runs to 100 residues: Urease subunit gamma (100 aa).

This sequence belongs to the urease gamma subunit family. Heterotrimer of UreA (gamma), UreB (beta) and UreC (alpha) subunits. Three heterotrimers associate to form the active enzyme.

Its subcellular location is the cytoplasm. The catalysed reaction is urea + 2 H2O + H(+) = hydrogencarbonate + 2 NH4(+). It functions in the pathway nitrogen metabolism; urea degradation; CO(2) and NH(3) from urea (urease route): step 1/1. This chain is Urease subunit gamma, found in Burkholderia thailandensis (strain ATCC 700388 / DSM 13276 / CCUG 48851 / CIP 106301 / E264).